A 1137-amino-acid polypeptide reads, in one-letter code: Calcium-activated potassium channel subunit alpha-1 (1137 aa).

Residues 1–44 are Extracellular-facing; sequence MSNNINANNLNTDSSSSPVNVPKMDALIIPVTMEVPCDSRGQRM. Residues 45–65 traverse the membrane as a helical segment; the sequence is WWAFLASSMVTFFGGLFIILL. The Cytoplasmic portion of the chain corresponds to 66–137; sequence WRTLKYLWTV…MISAQTLTGR (72 aa). Residues 138–158 form a helical membrane-spanning segment; sequence VLVVLVFALSIGALVIYFIDS. Topologically, residues 159–173 are extracellular; sequence SNPIESCQNFYKDFT. The chain crosses the membrane as a helical span at residues 174–194; it reads LQIDMAFNVFFLLYFGLRFIA. The Cytoplasmic portion of the chain corresponds to 195–198; that stretch reads ANDK. The chain crosses the membrane as a helical span at residues 199 to 219; the sequence is LWFWLEVNSVVDFFTVPPVFV. Residues 220–223 lie on the Extracellular side of the membrane; sequence SVYL. The chain crosses the membrane as a helical; Voltage-sensor span at residues 224 to 244; the sequence is NRSWLGLRFLRALRLIQFSEI. The Cytoplasmic portion of the chain corresponds to 245-259; that stretch reads LQFLNILKTSNSIKL. Residues 260-280 form a helical membrane-spanning segment; sequence VNLCSIFISTWLTAAGFIHLV. The Extracellular segment spans residues 281 to 294; it reads ENSGDPWENFQNNQ. An intramembrane region (pore-forming) is located at residues 295–317; that stretch reads QLTYWECVYLLMVTMSTVGYGDV. The Selectivity for potassium signature appears at 311-314; that stretch reads TVGY. Topologically, residues 318 to 326 are extracellular; it reads YAKTTLGRL. The helical transmembrane segment at 327–347 threads the bilayer; sequence FMVFFILGGLAMFASYVPEII. The Cytoplasmic segment spans residues 348–1137; the sequence is ELIGNRKKYG…KQKYVQEDRL (790 aa). One can recognise an RCK N-terminal 1 domain in the interval 366–508; that stretch reads RKHIVVCGHI…WNWKEGDDAI (143 aa). Positions 398, 421, and 423 each coordinate Mg(2+). The interval 515-535 is segment S7; that stretch reads LGFIAQSCLAPGLSTMLANLF. The interval 572-592 is segment S8; sequence LSFPAVCELVFAKLKLLMIAI. The interval 636–640 is heme-binding motif; that stretch reads CKACH. Residues 660–688 form a disordered region; that stretch reads EQPSTLSPKKKQRNGGMRNSPNSSPKLMR. The segment S9 stretch occupies residues 738 to 758; that stretch reads VLSGHVVVCIFGDVKSALIGL. In terms of domain architecture, RCK N-terminal 2 spans 740-884; the sequence is SGHVVVCIFG…MDRSSPDNSP (145 aa). The Calcium bowl motif lies at 904–926; that stretch reads TELVNDSNVQFLDQDDDDDPDTE. The Ca(2+) site is built by Gln913, Asp916, Asp919, and Asp921. Residues 933 to 953 form a segment S10 region; it reads FACGTAFAVSVLDSLMSATYF. A compositionally biased stretch (low complexity) spans 1088–1112; sequence ASLSHSSHSSYSSSKKSSSVHSIPS. Residues 1088 to 1137 form a disordered region; that stretch reads ASLSHSSHSSYSSSKKSSSVHSIPSTANRPNRTKTRDSREKQKYVQEDRL. Over residues 1121–1137 the composition is skewed to basic and acidic residues; sequence KTRDSREKQKYVQEDRL.

The protein belongs to the potassium channel family. Calcium-activated (TC 1.A.1.3) subfamily. KCa1.1/KCNMA1 sub-subfamily. In terms of assembly, homotetramer; which constitutes the calcium-activated potassium channel.

It is found in the cell membrane. It carries out the reaction K(+)(in) = K(+)(out). Ethanol and carbon monoxide-bound heme increase channel activation. Heme inhibits channel activation. Potassium channel activated by both membrane depolarization or increase in cytosolic Ca(2+) that mediates export of K(+). It is also activated by the concentration of cytosolic Mg(2+). Its activation dampens the excitatory events that elevate the cytosolic Ca(2+) concentration and/or depolarize the cell membrane. It therefore contributes to repolarization of the membrane potential. Plays a key role in controlling excitability in a number of systems, such as regulation of the contraction of smooth muscle, the tuning of hair cells in the cochlea, regulation of transmitter release, and innate immunity. In smooth muscles, its activation by high level of Ca(2+), caused by ryanodine receptors in the sarcoplasmic reticulum, regulates the membrane potential. In cochlea cells, its number and kinetic properties partly determine the characteristic frequency of each hair cell and thereby helps to establish a tonotopic map. Highly sensitive to both iberiotoxin (IbTx) and charybdotoxin (CTX). In Gallus gallus (Chicken), this protein is Calcium-activated potassium channel subunit alpha-1 (KCNMA1).